We begin with the raw amino-acid sequence, 99 residues long: Ferredoxin, vegetative (99 aa).

The 2Fe-2S ferredoxin-type domain occupies 4 to 96 (YQVRLINKKR…DCTIRTHQEP (93 aa)). [2Fe-2S] cluster contacts are provided by C42, C47, C50, and C80.

The protein belongs to the 2Fe2S plant-type ferredoxin family. [2Fe-2S] cluster serves as cofactor.

Functionally, ferredoxins are iron-sulfur proteins that transfer electrons in a wide variety of metabolic reactions. Donates electrons to the nitrogenase 2. This chain is Ferredoxin, vegetative (fdxH2), found in Trichormus variabilis (strain ATCC 29413 / PCC 7937) (Anabaena variabilis).